The chain runs to 256 residues: MTEVGVIGGTGFQPGLPERRRTVFTPYGTVRVDITRVGDHRVYFINRHGKGHDLPPHRINYRAIVWAMRELGVKRILATNSVGVINSDEYEPGDIVLPVDFLDFTKRRPTTFYDEKVVHVDVTEPYCPELREALLKAADDLGYTVKEGAVYVATEGPRFETPAEIRAFRKLGGDIVGMTGFPEVVLARELEICYASVCLCTNYAAGIDDRRRTIDEVFELVEELRPKAVELIERCIEYIPPKRSCPCSQALEGAEV.

Phosphate-binding positions include Thr10 and 47 to 48 (RH). Met178 is a binding site for substrate. Thr179 provides a ligand contact to phosphate. 202-204 (NYA) is a binding site for substrate.

The protein belongs to the PNP/MTAP phosphorylase family. MTAP subfamily. Homotrimer.

The enzyme catalyses S-methyl-5'-thioinosine + phosphate = 5-(methylsulfanyl)-alpha-D-ribose 1-phosphate + hypoxanthine. The protein operates within purine metabolism; purine nucleoside salvage. In terms of biological role, catalyzes the reversible phosphorylation of S-methyl-5'-thioinosine (MTI) to hypoxanthine and 5-methylthioribose-1-phosphate. Involved in the breakdown of S-methyl-5'-thioadenosine (MTA), a major by-product of polyamine biosynthesis. Catabolism of (MTA) occurs via deamination to MTI and phosphorolysis to hypoxanthine. This Methanopyrus kandleri (strain AV19 / DSM 6324 / JCM 9639 / NBRC 100938) protein is Probable S-methyl-5'-thioinosine phosphorylase.